Reading from the N-terminus, the 5073-residue chain is Malformin synthetase mlfA (5073 aa).

Positions 194–585 are adenylation 1; the sequence is ERHATNRPHS…CGRADTQVKL (392 aa). Residues 726 to 799 enclose the Carrier 1 domain; that stretch reads SRLEQEVQLA…EAASLAEVQE (74 aa). Ser-760 carries the post-translational modification O-(pantetheine 4'-phosphoryl)serine. The segment at 837–1268 is condensation 1; sequence EDVFPCTTMQ…ALNTLSLLQA (432 aa). The segment at 1296–1685 is adenylation 2; the sequence is DRWVTRHPEG…GRKDTQVKLR (390 aa). A Carrier 2 domain is found at 1823-1900; the sequence is TPASELERTL…QLAAEVGEPA (78 aa). O-(pantetheine 4'-phosphoryl)serine is present on Ser-1860. 2 disordered regions span residues 1901–1930 and 1963–1984; these read GQSA…DGVD and GGSS…SSSK. Low complexity-rich tracts occupy residues 1903–1927 and 1965–1982; these read SASS…STND and SSSN…SSSS. Residues 2031–2446 are condensation 2; that stretch reads EDIYPATALQ…AVSCSDTETL (416 aa). The segment at 2469 to 2861 is adenylation 3; sequence SRTPHAPAVC…IGRRDGQLKL (393 aa). In terms of domain architecture, Carrier 3 spans 2997–3073; sequence RPKTSQEQEM…QLICHLNSIR (77 aa). Ser-3034 carries the O-(pantetheine 4'-phosphoryl)serine modification. 2 condensation regions span residues 3090-3555 and 3576-3995; these read WVAL…TYDQ and DIYP…EQLV. Positions 4020 to 4410 are adenylation 4; the sequence is HASRQAVCAW…VGRKDNQIKF (391 aa). Residues 4544 to 4620 enclose the Carrier 4 domain; it reads MPSTAAERKM…DLGDQARSPN (77 aa). Ser-4581 carries the post-translational modification O-(pantetheine 4'-phosphoryl)serine. The tract at residues 4611–4633 is disordered; the sequence is DLGDQARSPNADNQRVSTASSAG. Residues 4617–4631 are compositionally biased toward polar residues; it reads RSPNADNQRVSTASS. The interval 4657 to 4991 is condensation 5; it reads DVLPTTSFQR…LQTIVQHQNN (335 aa).

The protein belongs to the NRP synthetase family.

It participates in secondary metabolite biosynthesis. Functionally, nonribosomal peptide synthetase; part of the gene cluster that mediates the biosynthesis of malformins, cyclic pentapeptides with a disulfide bond between 2 consecutive cysteins, that show potential anti-tumor as well as antimalarial and antitrypanosomal properties. The nonribosomal peptide synthetase mlfA is responsible of the formation of the cyclic pentapeptide. The malformin biosynthesis clusters in malformin-producing fungi also contain enzymes involved in the formation of the disulfide bond between the two consecutive cysteins within malformins, in addition to additional tailoring enzymes such as methyltransferases or oxidoreductases. They are also composed of up to 4 major facilitator superfamily transporters, and transcription factors probably involved in the regulation of the expression of those clusters. In Aspergillus tubingensis (strain CBS 134.48), this protein is Malformin synthetase mlfA.